The chain runs to 493 residues: Poly(ribitol-phosphate) alpha-N-acetylglucosaminyltransferase (493 aa).

Residues G17, K59, H249, R326, K331, T383, and 403–411 each bind UDP-N-acetyl-alpha-D-glucosamine; that span reads EGQGLSMIE.

It belongs to the glycosyltransferase group 1 family. As to quaternary structure, homotrimer.

The protein localises to the cytoplasm. It carries out the reaction 4-O-[(D-ribitylphospho)(n)-di{(2R)-glycerylphospho}]-N-acetyl-beta-D-mannosaminyl-(1-&gt;4)-N-acetyl-alpha-D-glucosaminyl di-trans,octa-cis-undecaprenyl diphosphate + n UDP-N-acetyl-alpha-D-glucosamine = 4-O-([2-N-acetyl-alpha-D-glucosaminyl-1-D-ribitylphospho](n)-di{[2R]-1-glycerylphospho})-N-acetyl-beta-D-mannosaminyl-(1-&gt;4)-N-acetyl-alpha-D-glucosaminyl di-trans,octa-cis-undecaprenyl diphosphate + n UDP + n H(+). It functions in the pathway cell wall biogenesis; poly(ribitol phosphate) teichoic acid biosynthesis. In terms of biological role, attaches N-acetyl-alpha-D-glucosamine residues to poly(RboP)-wall teichoic acids (WTAs). The chain is Poly(ribitol-phosphate) alpha-N-acetylglucosaminyltransferase from Staphylococcus aureus (strain COL).